Here is a 143-residue protein sequence, read N- to C-terminus: Large ribosomal subunit protein uL11 (143 aa).

Belongs to the universal ribosomal protein uL11 family. As to quaternary structure, part of the ribosomal stalk of the 50S ribosomal subunit. Interacts with L10 and the large rRNA to form the base of the stalk. L10 forms an elongated spine to which L12 dimers bind in a sequential fashion forming a multimeric L10(L12)X complex. One or more lysine residues are methylated.

Functionally, forms part of the ribosomal stalk which helps the ribosome interact with GTP-bound translation factors. The chain is Large ribosomal subunit protein uL11 from Halorhodospira halophila (strain DSM 244 / SL1) (Ectothiorhodospira halophila (strain DSM 244 / SL1)).